We begin with the raw amino-acid sequence, 144 residues long: ESNQGYVNSNVGIELARYETTNYTESGSFDTDLARFRGTSDSIHTSRNTYTAADCATGYYSFAHEIGHLQSARDIATDSSTSPYAYGHGYRYEPATGWRTIMAYNCTRSCPRLNYWSNPNISYDIGPDNQRVLVNTKATIAAFR.

H64 serves as a coordination point for Zn(2+). E65 is a catalytic residue. A Zn(2+)-binding site is contributed by H68.

Belongs to the peptidase M72 family. The cofactor is Zn(2+).

It carries out the reaction Cleavage of Xaa-|-Asp, Xaa-|-Glu and Xaa-|-cysteic acid bonds.. Its function is as follows. Metalloprotease, specifically cleaves on the N-terminal side of aspartyl, glutamyl and cysteic acid residues. The chain is Peptidyl-Asp metalloendopeptidase from Pseudomonas fragi.